The primary structure comprises 325 residues: mRNA decay factor CTH1 (325 aa).

C3H1-type zinc fingers lie at residues Leu204–Asn232 and Asn242–Asp270. The segment at Ser284–Asn306 is disordered. Over residues Leu292–Asn306 the composition is skewed to polar residues.

In terms of biological role, binds to specific AU-rich elements (ARE) in the 3'-untranslated region of target mRNAs and promotes their degradation. In response to iron deficiency, promotes the decay of many mRNAs encoding proteins involved in iron-dependent pathways. Negatively regulates primarily iron-dependent mitochondrial processes including respiration and amino acid biosynthesis. This is mRNA decay factor CTH1 (CTH1) from Saccharomyces cerevisiae (strain ATCC 204508 / S288c) (Baker's yeast).